Consider the following 130-residue polypeptide: Small ribosomal subunit protein uS9 (130 aa).

Belongs to the universal ribosomal protein uS9 family.

The chain is Small ribosomal subunit protein uS9 from Delftia acidovorans (strain DSM 14801 / SPH-1).